The primary structure comprises 178 residues: Large ribosomal subunit protein uL6 (178 aa).

It belongs to the universal ribosomal protein uL6 family. Part of the 50S ribosomal subunit.

Its function is as follows. This protein binds to the 23S rRNA, and is important in its secondary structure. It is located near the subunit interface in the base of the L7/L12 stalk, and near the tRNA binding site of the peptidyltransferase center. The polypeptide is Large ribosomal subunit protein uL6 (Buchnera aphidicola subsp. Acyrthosiphon pisum (strain APS) (Acyrthosiphon pisum symbiotic bacterium)).